A 142-amino-acid polypeptide reads, in one-letter code: Large ribosomal subunit protein uL11 (142 aa).

Belongs to the universal ribosomal protein uL11 family. As to quaternary structure, part of the ribosomal stalk of the 50S ribosomal subunit. Interacts with L10 and the large rRNA to form the base of the stalk. L10 forms an elongated spine to which L12 dimers bind in a sequential fashion forming a multimeric L10(L12)X complex. Post-translationally, one or more lysine residues are methylated.

Its function is as follows. Forms part of the ribosomal stalk which helps the ribosome interact with GTP-bound translation factors. The chain is Large ribosomal subunit protein uL11 from Magnetococcus marinus (strain ATCC BAA-1437 / JCM 17883 / MC-1).